Consider the following 166-residue polypeptide: Vasopressin-neurophysin 2-copeptin (166 aa).

Positions 1–19 (MPDATLPACFLGLLALTSA) are cleaved as a signal peptide. Cys-20 and Cys-25 are disulfide-bonded. Gly-28 carries the glycine amide modification. 7 cysteine pairs are disulfide-bonded: Cys-41–Cys-85, Cys-44–Cys-58, Cys-52–Cys-75, Cys-59–Cys-65, Cys-92–Cys-104, Cys-98–Cys-116, and Cys-105–Cys-110. N-linked (GlcNAc...) asparagine glycosylation is present at Asn-133.

Belongs to the vasopressin/oxytocin family. As to quaternary structure, interacts with vasopressin receptors V1bR/AVPR1B (Ki=85 pM), V1aR/AVPR1A (Ki=0.6 nM) and V2R/AVPR2 (Ki=4.9 nM). Interacts with oxytocin receptor (OXTR) (Ki=110 nM). In terms of processing, a shorter neurophysin molecule (32-123) is called neurophysin-I and is derived from the complete protein (called neurophysin III) by proteolytic degradation (in vivo or after extraction).

The protein localises to the secreted. Functionally, neurophysin 2 specifically binds vasopressin. Vasopressin has a direct antidiuretic action on the kidney, it also causes vasoconstriction of the peripheral vessels. Acts by binding to vasopressin receptors (V1bR/AVPR1B, V1aR/AVPR1A, and V2R/AVPR2). In Sus scrofa (Pig), this protein is Vasopressin-neurophysin 2-copeptin (AVP).